The following is a 120-amino-acid chain: NAD(P)H-quinone oxidoreductase subunit 3, chloroplastic (120 aa).

A run of 3 helical transmembrane segments spans residues 7–27, 64–84, and 88–108; these read YDTF…AFSI, MFAL…PWAM, and ILGL…IVGL.

This sequence belongs to the complex I subunit 3 family. In terms of assembly, NDH is composed of at least 16 different subunits, 5 of which are encoded in the nucleus.

The protein localises to the plastid. Its subcellular location is the chloroplast thylakoid membrane. It carries out the reaction a plastoquinone + NADH + (n+1) H(+)(in) = a plastoquinol + NAD(+) + n H(+)(out). The catalysed reaction is a plastoquinone + NADPH + (n+1) H(+)(in) = a plastoquinol + NADP(+) + n H(+)(out). Its function is as follows. NDH shuttles electrons from NAD(P)H:plastoquinone, via FMN and iron-sulfur (Fe-S) centers, to quinones in the photosynthetic chain and possibly in a chloroplast respiratory chain. The immediate electron acceptor for the enzyme in this species is believed to be plastoquinone. Couples the redox reaction to proton translocation, and thus conserves the redox energy in a proton gradient. The sequence is that of NAD(P)H-quinone oxidoreductase subunit 3, chloroplastic from Cryptomeria japonica (Japanese cedar).